The primary structure comprises 1322 residues: Protein fantom (1322 aa).

The signal sequence occupies residues 1–22 (MVSARYPIEKWSRPQLEDHFHN). Positions 15–89 (QLEDHFHNVV…MKLKAAKQQL (75 aa)) form a coiled coil. Over residues 108 to 119 (RSTFRQPPSTFR) the composition is skewed to polar residues. Disordered regions lie at residues 108–151 (RSTF…GEKL), 189–275 (KSSV…PDQT), and 392–418 (RIEE…SQSE). The span at 195-217 (SSPPTRLSTSSSSKSSSSNNNND) shows a compositional bias: low complexity. Residues 224–234 (ELEEMSEMSDD) show a composition bias toward acidic residues. The stretch at 274 to 362 (QTEKVLLDKL…EDQKKFEAMR (89 aa)) forms a coiled coil. Residues 456–538 (ASENSLARWQ…FMLEEQIRTI (83 aa)) adopt a coiled-coil conformation. Disordered stretches follow at residues 891–1094 (AELH…KPRN) and 1121–1149 (TDPL…PVPL). Residues 918 to 927 (TDSSDTSFSH) show a composition bias toward low complexity. Over residues 956–975 (SDGEEEADRIVFDDDDDEIE) the composition is skewed to acidic residues. Positions 984 to 996 (RDPEPLEVPERQV) are enriched in basic and acidic residues. The segment covering 1015–1029 (NGTNESKESTPVTQR) has biased composition (polar residues). The span at 1042 to 1067 (PELEPESGPEPEPVVESEPNEVAETE) shows a compositional bias: acidic residues. Basic and acidic residues predominate over residues 1068 to 1080 (EDRKRELKTEELK). Positions 1127 to 1139 (SVPPSESSSTSSP) are enriched in low complexity.

This sequence belongs to the RPGRIP1 family. As to expression, expressed at the transition zone at the base of cilia. Expressed in ciliated sensory neurons, including the amphid neurons in the head.

It is found in the cell projection. It localises to the cilium. In terms of biological role, thought to have an important role in cilia formation and cilia-mediated chemosensation. Involved in the docking of other MKS/MKSR proteins localized to the transition zone of the cilia. This is Protein fantom (mks-5) from Caenorhabditis elegans.